Here is a 403-residue protein sequence, read N- to C-terminus: MASQPPPPPKPWETRRIPGAGPGPGPGPTFQSADLGPTLMTRPGQPALTRVPPPILPRPSQQTGSSSVNTFRPAYSSFSSGYGAYGNSFYGGYSPYSYGYNGLGYNRLRVDDLPPSRFVQQAEESSRGAFQSIESIVHAFASVSMMMDATFSAVYNSFRAVLDVANHFSRLKIHFTKVFSAFALVRTIRYLYRRLQRMLGLRRGSENEDLWAESEGTVACLGAEDRAATSAKSWPIFLFFAVILGGPYLIWKLLSTHSDEVTDSINWASGEDDHVVARAEYDFAAVSEEEISFRAGDMLNLALKEQQPKVRGWLLASLDGQTTGLIPANYVKILGKRKGRKTVESSKVSKQQQSFTNPTLTKGATVADSLDEQEAAFESVFVETNKVPVAPDSIGKDGEKQDL.

Residues 1 to 11 show a composition bias toward pro residues; that stretch reads MASQPPPPPKP. A disordered region spans residues 1–68; that stretch reads MASQPPPPPK…PSQQTGSSSV (68 aa). Residues 1–134 lie on the Peroxisomal matrix side of the membrane; that stretch reads MASQPPPPPK…SSRGAFQSIE (134 aa). Residues 59 to 68 show a composition bias toward polar residues; that stretch reads PSQQTGSSSV. Residues 135 to 155 form a helical membrane-spanning segment; the sequence is SIVHAFASVSMMMDATFSAVY. The segment at 145 to 233 is targeting to peroxisomes; sequence MMMDATFSAV…EDRAATSAKS (89 aa). At 156 to 174 the chain is on the cytoplasmic side; it reads NSFRAVLDVANHFSRLKIH. The helical transmembrane segment at 175 to 192 threads the bilayer; sequence FTKVFSAFALVRTIRYLY. The tract at residues 175-196 is interaction with PEX19; that stretch reads FTKVFSAFALVRTIRYLYRRLQ. The Peroxisomal matrix portion of the chain corresponds to 193-233; that stretch reads RRLQRMLGLRRGSENEDLWAESEGTVACLGAEDRAATSAKS. A helical membrane pass occupies residues 234–254; it reads WPIFLFFAVILGGPYLIWKLL. Residues 255 to 403 lie on the Cytoplasmic side of the membrane; sequence STHSDEVTDS…IGKDGEKQDL (149 aa). The region spanning 272 to 336 is the SH3 domain; the sequence is DDHVVARAEY…PANYVKILGK (65 aa). Position 354 is a phosphoserine (Ser354).

It belongs to the peroxin-13 family. As to quaternary structure, interacts (via SH3 domain) with PEX14 (via SH3-binding motif); forming the PEX13-PEX14 docking complex. Interacts with PEX19.

The protein localises to the peroxisome membrane. In terms of biological role, component of the PEX13-PEX14 docking complex, a translocon channel that specifically mediates the import of peroxisomal cargo proteins bound to PEX5 receptor. The PEX13-PEX14 docking complex forms a large import pore which can be opened to a diameter of about 9 nm. Mechanistically, PEX5 receptor along with cargo proteins associates with the PEX14 subunit of the PEX13-PEX14 docking complex in the cytosol, leading to the insertion of the receptor into the organelle membrane with the concomitant translocation of the cargo into the peroxisome matrix. Involved in the import of PTS1- and PTS2-type containing proteins. This chain is Peroxisomal membrane protein PEX13, found in Homo sapiens (Human).